The chain runs to 159 residues: Transcription elongation factor GreA (159 aa).

It belongs to the GreA/GreB family.

In terms of biological role, necessary for efficient RNA polymerase transcription elongation past template-encoded arresting sites. The arresting sites in DNA have the property of trapping a certain fraction of elongating RNA polymerases that pass through, resulting in locked ternary complexes. Cleavage of the nascent transcript by cleavage factors such as GreA or GreB allows the resumption of elongation from the new 3'terminus. GreA releases sequences of 2 to 3 nucleotides. The protein is Transcription elongation factor GreA of Buchnera aphidicola subsp. Acyrthosiphon pisum (strain APS) (Acyrthosiphon pisum symbiotic bacterium).